The primary structure comprises 802 residues: Copper-exporting P-type ATPase (802 aa).

2 HMA domains span residues 5 to 70 (KKTT…YGVA) and 72 to 138 (ETVE…YDAS). Residues cysteine 16, cysteine 19, cysteine 83, and cysteine 86 each coordinate Cu(+). Helical transmembrane passes span 161 to 181 (LIIS…HLFN), 192 to 212 (WFQF…FYVG), 224 to 244 (MDVL…YEMV), 256 to 276 (LYFE…YLEA), 411 to 431 (YFVP…ITLV), and 438 to 458 (PALV…LGLA). Residue aspartate 495 is the 4-aspartylphosphate intermediate of the active site. Aspartate 690 and aspartate 694 together coordinate Mg(2+). 2 helical membrane passes run 748–767 (LFWA…LGLL) and 771–790 (VAGA…ALRL).

Belongs to the cation transport ATPase (P-type) (TC 3.A.3) family. Type IB subfamily.

It is found in the cell membrane. The catalysed reaction is Cu(+)(in) + ATP + H2O = Cu(+)(out) + ADP + phosphate + H(+). Involved in copper export. The protein is Copper-exporting P-type ATPase (copA) of Staphylococcus aureus (strain MW2).